A 112-amino-acid chain; its full sequence is UPF0342 protein SUB0718 (112 aa).

Belongs to the UPF0342 family.

The protein is UPF0342 protein SUB0718 of Streptococcus uberis (strain ATCC BAA-854 / 0140J).